The following is a 439-amino-acid chain: Apolipoprotein N-acyltransferase (439 aa).

Transmembrane regions (helical) follow at residues 13-33, 47-67, 75-95, 97-117, 149-169, and 175-195; these read LLAGILFYLSFSKLNLYFLVF, LFSFGFSAFFLSLLWIRIPLI, FIAYPALVLLVLFLSLYQFGL, YLLWRVFKFSFFAFPFLYTLV, NAGTVFLGSFVVLLISLFPLF, and IFSLAIITPLLIYGFIKETSY. The region spanning 207–439 is the CN hydrolase domain; it reads IQPFVPQDVK…GSRGILLFSF (233 aa). Glu-248 acts as the Proton acceptor in catalysis. Lys-305 is a catalytic residue. Cys-355 acts as the Nucleophile in catalysis.

Belongs to the CN hydrolase family. Apolipoprotein N-acyltransferase subfamily.

The protein localises to the cell inner membrane. The enzyme catalyses N-terminal S-1,2-diacyl-sn-glyceryl-L-cysteinyl-[lipoprotein] + a glycerophospholipid = N-acyl-S-1,2-diacyl-sn-glyceryl-L-cysteinyl-[lipoprotein] + a 2-acyl-sn-glycero-3-phospholipid + H(+). It functions in the pathway protein modification; lipoprotein biosynthesis (N-acyl transfer). In terms of biological role, catalyzes the phospholipid dependent N-acylation of the N-terminal cysteine of apolipoprotein, the last step in lipoprotein maturation. This is Apolipoprotein N-acyltransferase from Aquifex aeolicus (strain VF5).